The primary structure comprises 99 residues: UPF0213 protein PC1_0597 (99 aa).

The GIY-YIG domain maps to 8–83 (PQWYLYILRT…KQLSKNQKER (76 aa)).

The protein belongs to the UPF0213 family.

The sequence is that of UPF0213 protein PC1_0597 from Pectobacterium carotovorum subsp. carotovorum (strain PC1).